The primary structure comprises 604 residues: Ectonucleoside triphosphate diphosphohydrolase 7 (604 aa).

The Cytoplasmic segment spans residues 1–28 (MARISFSYLCPASWYFTVPTVSPFLRQR). Residues 29-49 (VAFLGLFFISCLLLLMLIIDF) traverse the membrane as a helical segment. The Vesicular portion of the chain corresponds to 50 to 546 (RHWSASLPRD…QAHGSWFRLS (497 aa)). E217 functions as the Proton acceptor in the catalytic mechanism. N330 carries N-linked (GlcNAc...) asparagine glycosylation. A disulfide bridge links C448 with C477. A helical transmembrane segment spans residues 547 to 567 (FVYNHYLFFACILVVLLAIVL). Over 568 to 604 (YLLRLRRIHHRQTRASAPLDLLWLEEVVPMMGVQVGP) the chain is Cytoplasmic.

Belongs to the GDA1/CD39 NTPase family. It depends on Ca(2+) as a cofactor. The cofactor is Mg(2+).

Its subcellular location is the cytoplasmic vesicle membrane. It carries out the reaction a ribonucleoside 5'-triphosphate + H2O = a ribonucleoside 5'-diphosphate + phosphate + H(+). The catalysed reaction is UTP + H2O = UDP + phosphate + H(+). The enzyme catalyses GTP + H2O = GDP + phosphate + H(+). It catalyses the reaction CTP + H2O = CDP + phosphate + H(+). In terms of biological role, catalyzes the hydrolysis of nucleoside triphosphates and diphosphates in a calcium- or magnesium-dependent manner. Preferentially hydrolyzes nucleoside 5'-triphosphates, with substrate preference for UTP &gt; GTP &gt; CTP. Hydrolyzes ATP and nucleoside diphosphates only to a minor extent. This chain is Ectonucleoside triphosphate diphosphohydrolase 7 (ENTPD7), found in Pongo abelii (Sumatran orangutan).